Here is a 419-residue protein sequence, read N- to C-terminus: Caspase-12 (419 aa).

Residues 1-92 (MAARRTHERD…QLSLQFSNDE (92 aa)) form the CARD domain. S85 bears the Phosphoserine mark. A disordered region spans residues 88 to 113 (FSNDEDDGPQKICTPSSPSESKRKVE). Active-site residues include H250 and C298.

It belongs to the peptidase C14A family. As to quaternary structure, heterotetramer that consists of two anti-parallel arranged heterodimers, each one formed by two subunits (Potential). Interacts with TRAF2 under resting conditions; this interaction is reduced in ER stress conditions. As to expression, mainly expressed in skeletal muscle and lung.

Its function is as follows. Involved in the activation cascade of caspases responsible for apoptosis execution. The sequence is that of Caspase-12 (Casp12) from Mus musculus (Mouse).